Consider the following 507-residue polypeptide: Cobyric acid synthase (507 aa).

The GATase cobBQ-type domain occupies 251 to 448 (DIDIAVVHLP…LHGLFDSDAF (198 aa)). Catalysis depends on Cys-332, which acts as the Nucleophile. Residue His-440 is part of the active site.

The protein belongs to the CobB/CobQ family. CobQ subfamily.

Its pathway is cofactor biosynthesis; adenosylcobalamin biosynthesis. Functionally, catalyzes amidations at positions B, D, E, and G on adenosylcobyrinic A,C-diamide. NH(2) groups are provided by glutamine, and one molecule of ATP is hydrogenolyzed for each amidation. In Klebsiella pneumoniae (strain 342), this protein is Cobyric acid synthase.